The chain runs to 433 residues: Pyrimidine-nucleoside phosphorylase (433 aa).

A phosphate-binding site is contributed by 81–83 (KHS). K(+) is bound by residues Gly88 and Thr90. Residues Thr92, 108-110 (KMS), and Thr120 each bind phosphate. Substrate-binding residues include Arg168 and Lys187. K(+) contacts are provided by Leu243, Ala246, and Glu255.

It belongs to the thymidine/pyrimidine-nucleoside phosphorylase family. In terms of assembly, homodimer. Requires K(+) as cofactor.

It carries out the reaction uridine + phosphate = alpha-D-ribose 1-phosphate + uracil. It catalyses the reaction thymidine + phosphate = 2-deoxy-alpha-D-ribose 1-phosphate + thymine. The enzyme catalyses 2'-deoxyuridine + phosphate = 2-deoxy-alpha-D-ribose 1-phosphate + uracil. Catalyzes phosphorolysis of the pyrimidine nucleosides uridine, thymidine and 2'-deoxyuridine with the formation of the corresponding pyrimidine base and ribose-1-phosphate. In Staphylococcus epidermidis (strain ATCC 12228 / FDA PCI 1200), this protein is Pyrimidine-nucleoside phosphorylase (pdp).